The following is a 530-amino-acid chain: Cation transporter HKT2;1 (530 aa).

The Cytoplasmic portion of the chain corresponds to 1–40 (MTSIYHDFIHNKLQSFGRIGRYFVNFVVLAHRFIALHIHP). Helical transmembrane passes span 41–61 (FWIQ…LLMF) and 102–122 (IVVI…FLGL). Residues 123–186 (MLRLNHKHNP…DLKRSKRLRW (64 aa)) are Cytoplasmic-facing. The next 2 helical transmembrane spans lie at 187–207 (FLGF…FLLV) and 260–280 (GLLL…PLFL). The Cytoplasmic segment spans residues 281 to 317 (RLLIWFLGKVTKLRELKLMIKNPEELQYDYLLPKLPT). Transmembrane regions (helical) follow at residues 318–338 (AFLA…FGAV) and 372–392 (IDCS…MYLP). Topologically, residues 393–418 (PSTTFALSNGDEKTANKKAKRKLGLV) are cytoplasmic. 2 consecutive transmembrane segments (helical) span residues 419-439 (VQNL…VAFI) and 494-514 (SLSG…MLYG). Residues 515–530 (RLKAFTKGTGEYWRLW) are Cytoplasmic-facing.

It belongs to the TrkH potassium transport family. HKT (TC 2.A.38.3) subfamily. In terms of tissue distribution, expressed in epidermis and vascular tissue of endodermis in roots, and in cells surrounding the vasculature in leaves.

The protein localises to the membrane. It carries out the reaction Na(+)(in) = Na(+)(out). Its function is as follows. Seems to be involved in regulation of potassium-sodium homeostasis. Seems to act as a high-affinity sodium transporter, which mediates increased sodium uptake in roots under potassium deficiency and contributes to sodium accumulation and salt toxicity. Involved in nutritional sodium uptake and distribution in potassium-starved roots to allow plant growth. May also act as a potassium transporter. Functions as a sodium-potassium cotransporter. The protein is Cation transporter HKT2;1 of Oryza sativa subsp. indica (Rice).